Reading from the N-terminus, the 589-residue chain is Coronatine-insensitive protein homolog 2 (589 aa).

In terms of domain architecture, F-box spans 18 to 59 (IPDVALGLVMGFVEDPWDRDAISLVCRHWCRVDALSRKHVTV). Jasmonate is bound by residues R87, R352, R414, and R501.

As to quaternary structure, interacts with TIFY9/JAZ5, TIFY11C/JAZ11 and TIFY11D/JAZ12 in a coronatine-dependent manner.

Involved in jasmonate (JA) signaling. Required for jasmonate signaling in plant defense responses. Component of SCF(COI1) E3 ubiquitin ligase complexes, which may mediate the ubiquitination and subsequent proteasomal degradation of target proteins, including TIFY/JAZ family. In Oryza sativa subsp. indica (Rice), this protein is Coronatine-insensitive protein homolog 2.